A 311-amino-acid polypeptide reads, in one-letter code: Putative ankyrin repeat protein RF_0923 (311 aa).

5 ANK repeats span residues 42-71 (IDNT…EQAI), 77-106 (NGNT…PQAI), 112-141 (NGNT…PQAI), 147-176 (NGNT…EQAI), and 182-213 (KGCT…AINH).

The sequence is that of Putative ankyrin repeat protein RF_0923 from Rickettsia felis (strain ATCC VR-1525 / URRWXCal2) (Rickettsia azadi).